Consider the following 503-residue polypeptide: Aromatase (503 aa).

The next 2 helical transmembrane spans lie at Glu19–Trp39 and Met303–Ala323. Substrate-binding residues include Asp309 and Met374. Cys437 is a heme binding site.

The protein belongs to the cytochrome P450 family. The cofactor is heme. In terms of processing, phosphorylated in vitro by PKA and PKG/PRKG1. These phosphorylations inhibit the catalytic activity as measured by estrone synthesis from androstenedione (36% decrease for PKA and 30% for PKG/PRKG1). In terms of tissue distribution, widely expressed, including in adult and fetal brain, placenta, skin fibroblasts, adipose tissue and gonads.

It is found in the endoplasmic reticulum membrane. It localises to the microsome membrane. It catalyses the reaction testosterone + 3 reduced [NADPH--hemoprotein reductase] + 3 O2 = 17beta-estradiol + formate + 3 oxidized [NADPH--hemoprotein reductase] + 4 H2O + 4 H(+). It carries out the reaction androst-4-ene-3,17-dione + 3 reduced [NADPH--hemoprotein reductase] + 3 O2 = estrone + formate + 3 oxidized [NADPH--hemoprotein reductase] + 4 H2O + 4 H(+). The enzyme catalyses androst-4-ene-3,17-dione + reduced [NADPH--hemoprotein reductase] + O2 = 19-hydroxyandrost-4-ene-3,17-dione + oxidized [NADPH--hemoprotein reductase] + H2O + H(+). The catalysed reaction is 19-hydroxyandrost-4-ene-3,17-dione + reduced [NADPH--hemoprotein reductase] + O2 = 19-oxo-androst-4-ene-3,17-dione + oxidized [NADPH--hemoprotein reductase] + 2 H2O + H(+). It catalyses the reaction 19-oxo-androst-4-ene-3,17-dione + reduced [NADPH--hemoprotein reductase] + O2 = estrone + formate + oxidized [NADPH--hemoprotein reductase] + H2O + 2 H(+). It carries out the reaction estrone + reduced [NADPH--hemoprotein reductase] + O2 = 2-hydroxyestrone + oxidized [NADPH--hemoprotein reductase] + H2O + H(+). The enzyme catalyses 17beta-hydroxy-5alpha-androstan-3-one + reduced [NADPH--hemoprotein reductase] + O2 = 17beta,19-dihydroxy-3-oxo-5alpha-androstanone + oxidized [NADPH--hemoprotein reductase] + H2O + H(+). The catalysed reaction is 17beta,19-dihydroxy-3-oxo-5alpha-androstanone + reduced [NADPH--hemoprotein reductase] + O2 = 17beta-hydroxy-3,19-dioxo-5alpha-androstanone + oxidized [NADPH--hemoprotein reductase] + 2 H2O + H(+). It catalyses the reaction 17beta-hydroxy-3,19-dioxo-5alpha-androstanone + reduced [NADPH--hemoprotein reductase] + O2 = 17beta-hydroxy-3-oxo-19-nor-5alpha-androst-1-ene + formate + oxidized [NADPH--hemoprotein reductase] + H2O + 2 H(+). The protein operates within steroid hormone biosynthesis. A cytochrome P450 monooxygenase that catalyzes the conversion of C19 androgens, androst-4-ene-3,17-dione (androstenedione) and testosterone to the C18 estrogens, estrone and estradiol, respectively. Catalyzes three successive oxidations of C19 androgens: two conventional oxidations at C19 yielding 19-hydroxy and 19-oxo/19-aldehyde derivatives, followed by a third oxidative aromatization step that involves C1-beta hydrogen abstraction combined with cleavage of the C10-C19 bond to yield a phenolic A ring and formic acid. Alternatively, the third oxidative reaction yields a 19-norsteroid and formic acid. Converts dihydrotestosterone to delta1,10-dehydro 19-nordihydrotestosterone and may play a role in homeostasis of this potent androgen. Also displays 2-hydroxylase activity toward estrone. Mechanistically, uses molecular oxygen inserting one oxygen atom into a substrate, and reducing the second into a water molecule, with two electrons provided by NADPH via cytochrome P450 reductase (CPR; NADPH-ferrihemoprotein reductase). This Homo sapiens (Human) protein is Aromatase.